The chain runs to 416 residues: Gamma-glutamyl phosphate reductase (416 aa).

Belongs to the gamma-glutamyl phosphate reductase family.

It is found in the cytoplasm. It catalyses the reaction L-glutamate 5-semialdehyde + phosphate + NADP(+) = L-glutamyl 5-phosphate + NADPH + H(+). It functions in the pathway amino-acid biosynthesis; L-proline biosynthesis; L-glutamate 5-semialdehyde from L-glutamate: step 2/2. In terms of biological role, catalyzes the NADPH-dependent reduction of L-glutamate 5-phosphate into L-glutamate 5-semialdehyde and phosphate. The product spontaneously undergoes cyclization to form 1-pyrroline-5-carboxylate. In Salmonella typhi, this protein is Gamma-glutamyl phosphate reductase.